A 201-amino-acid chain; its full sequence is Proteasome subunit beta type-2 (201 aa).

M1 carries the post-translational modification N-acetylmethionine.

This sequence belongs to the peptidase T1B family. As to quaternary structure, the 26S proteasome consists of a 20S proteasome core and two 19S regulatory subunits. The 20S proteasome core is a barrel-shaped complex made of 28 subunits that are arranged in four stacked rings. The two outer rings are each formed by seven alpha subunits, and the two inner rings are formed by seven beta subunits. The proteolytic activity is exerted by three beta-subunits PSMB5, PSMB6 and PSMB7.

It localises to the cytoplasm. Its subcellular location is the nucleus. Its function is as follows. Non-catalytic component of the 20S core proteasome complex involved in the proteolytic degradation of most intracellular proteins. This complex plays numerous essential roles within the cell by associating with different regulatory particles. Associated with two 19S regulatory particles, forms the 26S proteasome and thus participates in the ATP-dependent degradation of ubiquitinated proteins. The 26S proteasome plays a key role in the maintenance of protein homeostasis by removing misfolded or damaged proteins that could impair cellular functions, and by removing proteins whose functions are no longer required. Associated with the PA200 or PA28, the 20S proteasome mediates ubiquitin-independent protein degradation. This type of proteolysis is required in several pathways including spermatogenesis (20S-PA200 complex) or generation of a subset of MHC class I-presented antigenic peptides (20S-PA28 complex). The chain is Proteasome subunit beta type-2 (PSMB2) from Bos taurus (Bovine).